A 445-amino-acid polypeptide reads, in one-letter code: Argininosuccinate synthase (445 aa).

ATP is bound by residues 17 to 25 and alanine 43; that span reads AFSGGLDTS. Tyrosine 99 is a binding site for L-citrulline. ATP contacts are provided by glycine 129 and threonine 131. L-aspartate contacts are provided by threonine 131, asparagine 135, and aspartate 136. Asparagine 135 contributes to the L-citrulline binding site. ATP is bound at residue aspartate 136. L-citrulline-binding residues include arginine 139 and serine 192. Aspartate 194 contacts ATP. L-citrulline is bound by residues threonine 201, glutamate 203, and glutamate 280.

This sequence belongs to the argininosuccinate synthase family. Type 2 subfamily. As to quaternary structure, homotetramer.

It localises to the cytoplasm. It carries out the reaction L-citrulline + L-aspartate + ATP = 2-(N(omega)-L-arginino)succinate + AMP + diphosphate + H(+). Its pathway is amino-acid biosynthesis; L-arginine biosynthesis; L-arginine from L-ornithine and carbamoyl phosphate: step 2/3. This is Argininosuccinate synthase from Bordetella bronchiseptica (strain ATCC BAA-588 / NCTC 13252 / RB50) (Alcaligenes bronchisepticus).